The following is a 209-amino-acid chain: Germin-like protein (209 aa).

An N-terminal signal peptide occupies residues 1-18; it reads MIVPIFFLFSLLFSSSHG. An intrachain disulfide couples Cys24 to Cys39. The Cupin type-1 domain maps to 53–199; sequence SGLGITGNTT…ASFLDPAEIK (147 aa). Residue Asn60 is glycosylated (N-linked (GlcNAc...) asparagine). His101, His103, Glu108, and His147 together coordinate Mn(2+).

The protein resides in the secreted. Its subcellular location is the extracellular space. It is found in the apoplast. Its function is as follows. Has antibacterial activity against B.subtilis (MIC=5 ug), B.cereus (MIC=50 ug), A.hydrophila (MIC=2.5 ug), S.marcescens(MIC=10 ug), S.enterica (MIC=10 ug), P.entomophila (MIC=2.5 ug) and P.rhodesiae (MIC=10 ug). Has antifungal activity against F.solani KACC 40384 and F.oxysporum KACC 40032. Probably has no oxalate oxidase activity even if the active site is conserved. The chain is Germin-like protein from Morus alba (White mulberry).